Here is a 708-residue protein sequence, read N- to C-terminus: tRNA(Met) cytidine acetyltransferase TmcA (708 aa).

ATP-binding positions include Gln-189, 215-224 (GRGKTSALGL), and Arg-357. The region spanning 398-574 (PECVEQPERL…YSLLMVRGEH (177 aa)) is the N-acetyltransferase domain. Acetyl-CoA is bound by residues 502 to 504 (IAV) and 509 to 515 (QRQGIGS).

This sequence belongs to the RNA cytidine acetyltransferase family. TmcA subfamily.

The protein localises to the cytoplasm. It carries out the reaction cytidine(34) in elongator tRNA(Met) + acetyl-CoA + ATP + H2O = N(4)-acetylcytidine(34) in elongator tRNA(Met) + ADP + phosphate + CoA + H(+). In terms of biological role, catalyzes the formation of N(4)-acetylcytidine (ac(4)C) at the wobble position of tRNA(Met), by using acetyl-CoA as an acetyl donor and ATP (or GTP). This Vibrio cholerae serotype O1 (strain ATCC 39315 / El Tor Inaba N16961) protein is tRNA(Met) cytidine acetyltransferase TmcA.